A 57-amino-acid chain; its full sequence is Potassium channel toxin alpha-KTx 8.8 (57 aa).

An N-terminal signal peptide occupies residues 1 to 19 (MCRLYAIILIVLVMNVIMT). A propeptide spanning residues 20–28 (IIPDSKVEV) is cleaved from the precursor. Cystine bridges form between C31/C47, C34/C52, and C38/C54.

It belongs to the short scorpion toxin superfamily. Potassium channel inhibitor family. Alpha-KTx 08 subfamily. Post-translationally, contains 3 disulfide bonds. In terms of tissue distribution, expressed by the venom gland.

The protein resides in the secreted. Its function is as follows. Selectively inhibits voltage-gated potassium channels rKv1.2/KCNA2 (IC(50)=331 nM) and hKv1.3/KCNA3 (IC(50)=503 nM). Partially inihibts rKv1.6/KCNA6 (IC(50)=9983 nM). This Orthochirus scrobiculosus (Central Asian scorpion) protein is Potassium channel toxin alpha-KTx 8.8.